The following is a 316-amino-acid chain: Methionyl-tRNA formyltransferase (316 aa).

Serine 113–proline 116 contacts (6S)-5,6,7,8-tetrahydrofolate.

It belongs to the Fmt family.

The enzyme catalyses L-methionyl-tRNA(fMet) + (6R)-10-formyltetrahydrofolate = N-formyl-L-methionyl-tRNA(fMet) + (6S)-5,6,7,8-tetrahydrofolate + H(+). In terms of biological role, attaches a formyl group to the free amino group of methionyl-tRNA(fMet). The formyl group appears to play a dual role in the initiator identity of N-formylmethionyl-tRNA by promoting its recognition by IF2 and preventing the misappropriation of this tRNA by the elongation apparatus. The chain is Methionyl-tRNA formyltransferase from Proteus mirabilis (strain HI4320).